Reading from the N-terminus, the 497-residue chain is Glutamyl-tRNA(Gln) amidotransferase subunit A (497 aa).

Residues Lys-91 and Ser-166 each act as charge relay system in the active site. The disordered stretch occupies residues 143–171 (SSTENSAYGPTHNPWDLERTAGGSGGGSS). The active-site Acyl-ester intermediate is the Ser-190.

The protein belongs to the amidase family. GatA subfamily. Heterotrimer of A, B and C subunits.

It catalyses the reaction L-glutamyl-tRNA(Gln) + L-glutamine + ATP + H2O = L-glutaminyl-tRNA(Gln) + L-glutamate + ADP + phosphate + H(+). Functionally, allows the formation of correctly charged Gln-tRNA(Gln) through the transamidation of misacylated Glu-tRNA(Gln) in organisms which lack glutaminyl-tRNA synthetase. The reaction takes place in the presence of glutamine and ATP through an activated gamma-phospho-Glu-tRNA(Gln). This chain is Glutamyl-tRNA(Gln) amidotransferase subunit A, found in Corynebacterium glutamicum (strain R).